Reading from the N-terminus, the 496-residue chain is Probable cytosol aminopeptidase (496 aa).

Mn(2+)-binding residues include Lys257 and Asp262. Residue Lys269 is part of the active site. Asp281, Asp341, and Glu343 together coordinate Mn(2+). Residue Arg345 is part of the active site.

Belongs to the peptidase M17 family. Mn(2+) is required as a cofactor.

The protein resides in the cytoplasm. The enzyme catalyses Release of an N-terminal amino acid, Xaa-|-Yaa-, in which Xaa is preferably Leu, but may be other amino acids including Pro although not Arg or Lys, and Yaa may be Pro. Amino acid amides and methyl esters are also readily hydrolyzed, but rates on arylamides are exceedingly low.. It catalyses the reaction Release of an N-terminal amino acid, preferentially leucine, but not glutamic or aspartic acids.. Presumably involved in the processing and regular turnover of intracellular proteins. Catalyzes the removal of unsubstituted N-terminal amino acids from various peptides. In Synechococcus sp. (strain CC9311), this protein is Probable cytosol aminopeptidase.